The following is a 379-amino-acid chain: Cytochrome b (379 aa).

4 helical membrane passes run 33–53 (FGSLLGMCLVIQILTGLFLAM), 77–98 (WLIRYLHANGASMFFICLFIHV), 113–133 (WNIGIILLLTTMATAFVGYVL), and 178–198 (FFAFHFILPFIIAAFALVHLL). 2 residues coordinate heme b: histidine 83 and histidine 97. Heme b is bound by residues histidine 182 and histidine 196. Position 201 (histidine 201) interacts with a ubiquinone. The next 4 membrane-spanning stretches (helical) occupy residues 226–246 (TKDLLGIFLLLLVLMILALFF), 288–308 (LGGVLALVLSILILATFPLLN), 320–340 (VTQVIYWIFIANLLVLTWIGG), and 347–367 (FTTIGQIASITYFAIIIILIP).

This sequence belongs to the cytochrome b family. In terms of assembly, the cytochrome bc1 complex contains 11 subunits: 3 respiratory subunits (MT-CYB, CYC1 and UQCRFS1), 2 core proteins (UQCRC1 and UQCRC2) and 6 low-molecular weight proteins (UQCRH/QCR6, UQCRB/QCR7, UQCRQ/QCR8, UQCR10/QCR9, UQCR11/QCR10 and a cleavage product of UQCRFS1). This cytochrome bc1 complex then forms a dimer. Requires heme b as cofactor.

It localises to the mitochondrion inner membrane. Component of the ubiquinol-cytochrome c reductase complex (complex III or cytochrome b-c1 complex) that is part of the mitochondrial respiratory chain. The b-c1 complex mediates electron transfer from ubiquinol to cytochrome c. Contributes to the generation of a proton gradient across the mitochondrial membrane that is then used for ATP synthesis. In Akodon paranaensis (Parana grass mouse), this protein is Cytochrome b (MT-CYB).